Here is a 149-residue protein sequence, read N- to C-terminus: Calmodulin (149 aa).

Ala-2 is subject to N-acetylalanine. EF-hand domains follow at residues 8 to 43 (EQIAEFKEAFSLFDKDGDGTITTKELGTVMRSLGQN), 44 to 79 (PTEAELQDMINEVDADGNGTIDFPEFLTMMAKKMKD), 81 to 116 (DSEEEIREAFRVFDKDGNGYISAAELRHVMTNLGEK), and 117 to 149 (LTDEEVDEMIREADIDGDGQVNYEEFVQMMTAK). The Ca(2+) site is built by Asp-21, Asp-23, Asp-25, Thr-27, Glu-32, Asp-57, Asp-59, Asn-61, Thr-63, Glu-68, Asp-94, Asp-96, Asn-98, Tyr-100, and Glu-105. Lys-116 carries the post-translational modification N6,N6,N6-trimethyllysine. Ca(2+) contacts are provided by Asp-130, Asp-132, Asp-134, Gln-136, and Glu-141.

This sequence belongs to the calmodulin family.

Its function is as follows. Calmodulin acts as part of a calcium signal transduction pathway by mediating the control of a large number of enzymes, ion channels, aquaporins and other proteins through calcium-binding. Calcium-binding is required for the activation of calmodulin. Among the enzymes to be stimulated by the calmodulin-calcium complex are a number of protein kinases, such as myosin light-chain kinases and calmodulin-dependent protein kinase type II (CaMK2), and phosphatases. In Electrophorus electricus (Electric eel), this protein is Calmodulin (calm).